A 430-amino-acid polypeptide reads, in one-letter code: Adenylosuccinate synthetase (430 aa).

GTP-binding positions include 12–18 (GDEGKGK) and 40–42 (GHT). Residue aspartate 13 is the Proton acceptor of the active site. Mg(2+) contacts are provided by aspartate 13 and glycine 40. Residues 13-16 (DEGK), 38-41 (NAGH), threonine 129, arginine 143, glutamine 224, threonine 239, and arginine 303 each bind IMP. Catalysis depends on histidine 41, which acts as the Proton donor. 299 to 305 (ATTGRRR) lines the substrate pocket. Residues arginine 305, 331 to 333 (KLD), and 413 to 415 (SVG) contribute to the GTP site.

This sequence belongs to the adenylosuccinate synthetase family. Homodimer. Mg(2+) serves as cofactor.

The protein localises to the cytoplasm. It catalyses the reaction IMP + L-aspartate + GTP = N(6)-(1,2-dicarboxyethyl)-AMP + GDP + phosphate + 2 H(+). Its pathway is purine metabolism; AMP biosynthesis via de novo pathway; AMP from IMP: step 1/2. Functionally, plays an important role in the de novo pathway of purine nucleotide biosynthesis. Catalyzes the first committed step in the biosynthesis of AMP from IMP. This chain is Adenylosuccinate synthetase, found in Desulfatibacillum aliphaticivorans.